The chain runs to 360 residues: MSKVAILGAGNLALTFAGDIARRLNEEVTAVIWAPTTNRRNFNEVRGIGTLELVGPDYEGAFTPQLEDDLEAAILDAEFIFLTVPTLAQEGILRELVKFDLSETVLIALPGSATSLTCKNILFPSHSPVAVIESTTSPYACRRIGERVHMLGVKACFEVAATSLLSNDLTSRFEALFPNRLQWYKDAASIFFSNTNPVVHPPGILVAKDAIENGMSPLPKFYREFVPAAIERVQELDNERLEIIAALGLESETGFTYSKKWYGGQATEWKEFFETYEGYAEVGTPTTMHHRYLTEDVKHIMVLWVQIAEVAGVQVPAMKSVIKEAGNVLYEDLFMTGRTLASMNLGGANPYRIVDALNGN.

This sequence belongs to the lysopine/nopaline/octopine/opine/vitopine dehydrogenases family.

The sequence is that of Vitopine synthase (vis) from Allorhizobium ampelinum (strain ATCC BAA-846 / DSM 112012 / S4) (Agrobacterium vitis (strain S4)).